We begin with the raw amino-acid sequence, 649 residues long: UvrABC system protein C (649 aa).

Residues 12–91 (SSPGVYLMKS…IKQHRPKYNI (80 aa)) enclose the GIY-YIG domain. The UVR domain occupies 201–236 (NEVARLYRSKMNLASEQMRYEDAARYRDLLRAIEVT). The segment at 603-649 (RLHGGPLPNPPPPGEGAMGDGSIPSPRNGVMDDSIPSPSGRGWPKAG) is disordered.

It belongs to the UvrC family. As to quaternary structure, interacts with UvrB in an incision complex.

It is found in the cytoplasm. The UvrABC repair system catalyzes the recognition and processing of DNA lesions. UvrC both incises the 5' and 3' sides of the lesion. The N-terminal half is responsible for the 3' incision and the C-terminal half is responsible for the 5' incision. In Geobacter sp. (strain M21), this protein is UvrABC system protein C.